The primary structure comprises 173 residues: Phosphopantetheine adenylyltransferase (173 aa).

A substrate-binding site is contributed by threonine 9. ATP is bound by residues threonine 9 to phenylalanine 10 and histidine 17. Residues lysine 41, threonine 75, and arginine 89 each contribute to the substrate site. ATP is bound by residues glycine 90–arginine 92, glutamate 100, and histidine 125–serine 131.

This sequence belongs to the bacterial CoaD family. As to quaternary structure, homohexamer. Requires Mg(2+) as cofactor.

It localises to the cytoplasm. The catalysed reaction is (R)-4'-phosphopantetheine + ATP + H(+) = 3'-dephospho-CoA + diphosphate. It participates in cofactor biosynthesis; coenzyme A biosynthesis; CoA from (R)-pantothenate: step 4/5. Functionally, reversibly transfers an adenylyl group from ATP to 4'-phosphopantetheine, yielding dephospho-CoA (dPCoA) and pyrophosphate. The polypeptide is Phosphopantetheine adenylyltransferase (Methylacidiphilum infernorum (isolate V4) (Methylokorus infernorum (strain V4))).